A 395-amino-acid polypeptide reads, in one-letter code: Ribosomal RNA large subunit methyltransferase G (395 aa).

This sequence belongs to the methyltransferase superfamily. RlmG family.

It is found in the cytoplasm. The catalysed reaction is guanosine(1835) in 23S rRNA + S-adenosyl-L-methionine = N(2)-methylguanosine(1835) in 23S rRNA + S-adenosyl-L-homocysteine + H(+). In terms of biological role, specifically methylates the guanine in position 1835 (m2G1835) of 23S rRNA. The protein is Ribosomal RNA large subunit methyltransferase G of Yersinia pseudotuberculosis serotype O:1b (strain IP 31758).